The sequence spans 372 residues: uncharacterized protein (372 aa).

The disordered stretch occupies residues 328-353; the sequence is KKGQPCKDEDAVTVPLPSSDPGKETQ.

In terms of biological role, induces the SOS system when expressed in E.coli, therefore, it may play a role in DNA metabolism and/or in genome stability. This is an uncharacterized protein from Saccharomyces cerevisiae (strain ATCC 204508 / S288c) (Baker's yeast).